Reading from the N-terminus, the 329-residue chain is uncharacterized protein (329 aa).

2 helical membrane-spanning segments follow: residues 13 to 35 (IPVL…WATI) and 229 to 248 (VIPA…SVVY).

It is found in the cell membrane. This is an uncharacterized protein from Archaeoglobus fulgidus (strain ATCC 49558 / DSM 4304 / JCM 9628 / NBRC 100126 / VC-16).